The sequence spans 233 residues: Phosphatidylserine decarboxylase proenzyme (233 aa).

The active-site Schiff-base intermediate with substrate; via pyruvic acid is the serine 190. Serine 190 carries the post-translational modification Pyruvic acid (Ser); by autocatalysis.

The protein belongs to the phosphatidylserine decarboxylase family. PSD-A subfamily. As to quaternary structure, heterodimer of a large membrane-associated beta subunit and a small pyruvoyl-containing alpha subunit. Pyruvate is required as a cofactor. Post-translationally, is synthesized initially as an inactive proenzyme. Formation of the active enzyme involves a self-maturation process in which the active site pyruvoyl group is generated from an internal serine residue via an autocatalytic post-translational modification. Two non-identical subunits are generated from the proenzyme in this reaction, and the pyruvate is formed at the N-terminus of the alpha chain, which is derived from the carboxyl end of the proenzyme. The post-translation cleavage follows an unusual pathway, termed non-hydrolytic serinolysis, in which the side chain hydroxyl group of the serine supplies its oxygen atom to form the C-terminus of the beta chain, while the remainder of the serine residue undergoes an oxidative deamination to produce ammonia and the pyruvoyl prosthetic group on the alpha chain.

It is found in the cell membrane. The enzyme catalyses a 1,2-diacyl-sn-glycero-3-phospho-L-serine + H(+) = a 1,2-diacyl-sn-glycero-3-phosphoethanolamine + CO2. It participates in phospholipid metabolism; phosphatidylethanolamine biosynthesis; phosphatidylethanolamine from CDP-diacylglycerol: step 2/2. Catalyzes the formation of phosphatidylethanolamine (PtdEtn) from phosphatidylserine (PtdSer). The polypeptide is Phosphatidylserine decarboxylase proenzyme (Bartonella quintana (strain Toulouse) (Rochalimaea quintana)).